An 813-amino-acid polypeptide reads, in one-letter code: Protein PPP4R3C1 (813 aa).

The tract at residues 730–813 is disordered; the sequence is NESESAIEGQ…PPPKRPNLST (84 aa). Acidic residues predominate over residues 777 to 788; that stretch reads YDTDDENDDDPY.

It belongs to the SMEK family.

The sequence is that of Protein PPP4R3C1 from Mus musculus (Mouse).